A 237-amino-acid polypeptide reads, in one-letter code: tRNA (guanine-N(7)-)-methyltransferase (237 aa).

4 residues coordinate S-adenosyl-L-methionine: Glu-68, Glu-93, Asp-120, and Asp-143. Asp-143 is a catalytic residue. Substrate is bound by residues Lys-147, Asp-179, and 216 to 219 (TKFE).

It belongs to the class I-like SAM-binding methyltransferase superfamily. TrmB family.

It carries out the reaction guanosine(46) in tRNA + S-adenosyl-L-methionine = N(7)-methylguanosine(46) in tRNA + S-adenosyl-L-homocysteine. It functions in the pathway tRNA modification; N(7)-methylguanine-tRNA biosynthesis. Functionally, catalyzes the formation of N(7)-methylguanine at position 46 (m7G46) in tRNA. The protein is tRNA (guanine-N(7)-)-methyltransferase of Shewanella halifaxensis (strain HAW-EB4).